A 310-amino-acid chain; its full sequence is Isoflavone reductase homolog A622 (310 aa).

Residues 13-19, Arg-38, and Lys-47 contribute to the NADP(+) site; that span reads GGTGYIG. The active-site Proton acceptor is the Lys-135. Arg-139 contacts NADP(+).

This sequence belongs to the NmrA-type oxidoreductase family. Isoflavone reductase subfamily. Monomer. As to expression, expressed in roots and stems.

The protein resides in the cytoplasm. It functions in the pathway alkaloid biosynthesis; nicotine biosynthesis. In terms of biological role, NADPH-binding protein. Involved in the biosynthesis of pyridine alkaloid natural products, leading mainly to the production of anabasine, anatabine, nicotine and nornicotine, effective deterrents against herbivores with antiparasitic and pesticide properties (neurotoxins); nornicotine serves as the precursor in the synthesis of the carcinogen compound N'-nitrosonornicotine (NNN). Reductase involved in a late step of tobacco alkaloid biosynthesis. Triggers either the formation of a nicotinic acid-derived precursor or the final condensation reaction of tobacco alkaloids. This chain is Isoflavone reductase homolog A622, found in Nicotiana sylvestris (Wood tobacco).